The following is a 271-amino-acid chain: uncharacterized protein (271 aa).

A disordered region spans residues 233 to 261 (VEPDPNRFSEPVDQPTLVEEGKEARRTER). Basic and acidic residues predominate over residues 251–261 (EEGKEARRTER).

Functionally, may be involved in swimming motility. This is an uncharacterized protein from Haloferax volcanii (strain ATCC 29605 / DSM 3757 / JCM 8879 / NBRC 14742 / NCIMB 2012 / VKM B-1768 / DS2) (Halobacterium volcanii).